The following is a 100-amino-acid chain: Small ribosomal subunit protein uS14c (100 aa).

Belongs to the universal ribosomal protein uS14 family. In terms of assembly, part of the 30S ribosomal subunit.

It is found in the plastid. It localises to the chloroplast. Its function is as follows. Binds 16S rRNA, required for the assembly of 30S particles. In Euglena gracilis, this protein is Small ribosomal subunit protein uS14c.